A 535-amino-acid polypeptide reads, in one-letter code: Lecithin-cholesterol acyltransferase-like 4 (535 aa).

At serine 2 the chain carries N-acetylserine. The Acyl-ester intermediate role is filled by serine 182. Residues aspartate 391 and histidine 416 each act as charge relay system in the active site. Over residues 488-505 (STVNSISVSQPGDDQNPQ) the composition is skewed to polar residues. The interval 488–507 (STVNSISVSQPGDDQNPQAE) is disordered.

It belongs to the AB hydrolase superfamily. Lipase family.

This Arabidopsis thaliana (Mouse-ear cress) protein is Lecithin-cholesterol acyltransferase-like 4 (LCAT4).